The primary structure comprises 224 residues: MTLKNKSIVVLLSGGLDSSTVTGIAKKSEAKIFGLSFDYGQRHKKELNSASIIAKHFDIDEFKIIKLDLSLWGGSSLTDTQKNIPIEGVQTNKIPNTYVPGRNTIFISVALSYAEAIDADFIGLGVNALDYSGYPDCRPDYIKKFQELADLANKRGRENNPIKLWTPLLDLNKEEIIKLAFDNHVPLDKTWSCYSGNSKPCGKCDSCRIRNAAYEKWLNNNNKK.

12-22 (LSGGLDSSTVT) is an ATP binding site. Positions 193, 201, 204, and 207 each coordinate Zn(2+).

This sequence belongs to the QueC family. It depends on Zn(2+) as a cofactor.

It carries out the reaction 7-carboxy-7-deazaguanine + NH4(+) + ATP = 7-cyano-7-deazaguanine + ADP + phosphate + H2O + H(+). Its pathway is purine metabolism; 7-cyano-7-deazaguanine biosynthesis. Its function is as follows. Catalyzes the ATP-dependent conversion of 7-carboxy-7-deazaguanine (CDG) to 7-cyano-7-deazaguanine (preQ(0)). The chain is 7-cyano-7-deazaguanine synthase from Prochlorococcus marinus (strain AS9601).